The sequence spans 429 residues: Tryptophan synthase beta chain 2 (429 aa).

The segment at 18–40 (NINPDLPSPLPEPKNPEGGKNIE) is disordered. Lys-110 bears the N6-(pyridoxal phosphate)lysine mark.

Belongs to the TrpB family. As to quaternary structure, tetramer of two alpha and two beta chains. The cofactor is pyridoxal 5'-phosphate.

It carries out the reaction (1S,2R)-1-C-(indol-3-yl)glycerol 3-phosphate + L-serine = D-glyceraldehyde 3-phosphate + L-tryptophan + H2O. Its pathway is amino-acid biosynthesis; L-tryptophan biosynthesis; L-tryptophan from chorismate: step 5/5. The beta subunit is responsible for the synthesis of L-tryptophan from indole and L-serine. The protein is Tryptophan synthase beta chain 2 (trpB2) of Methanothermobacter thermautotrophicus (strain ATCC 29096 / DSM 1053 / JCM 10044 / NBRC 100330 / Delta H) (Methanobacterium thermoautotrophicum).